We begin with the raw amino-acid sequence, 129 residues long: uncharacterized protein (129 aa).

The N-terminal stretch at 1–17 (MCPECFFLMLFFCGYRA) is a signal peptide. The segment covering 26-36 (SSSSSSSFRSS) has biased composition (low complexity). A disordered region spans residues 26 to 76 (SSSSSSSFRSSPAYGFSGRPPGGAGCRERSQRSCLRPGGLPSLTRNPGLQR).

This is an uncharacterized protein from Escherichia coli O157:H7.